Consider the following 156-residue polypeptide: MQIQLLAVGTKMPTWVTEGFNEYKKRFPADCKLVLHEIAAQKRTRKADLNRVMQQEGKSLLQAIPKGNRIVTLEVKGQAWDTPKLAQQLEKWQMDGRDVTLLIGGPEGLSDECLAAAEQRWSLSKLTLPHPVVRLIVAESLYRAWSLNNNHPYHRE.

Residues Leu-73, Gly-104, and Leu-123–Leu-128 each bind S-adenosyl-L-methionine.

The protein belongs to the RNA methyltransferase RlmH family. As to quaternary structure, homodimer.

Its subcellular location is the cytoplasm. The catalysed reaction is pseudouridine(1915) in 23S rRNA + S-adenosyl-L-methionine = N(3)-methylpseudouridine(1915) in 23S rRNA + S-adenosyl-L-homocysteine + H(+). Specifically methylates the pseudouridine at position 1915 (m3Psi1915) in 23S rRNA. This Idiomarina loihiensis (strain ATCC BAA-735 / DSM 15497 / L2-TR) protein is Ribosomal RNA large subunit methyltransferase H.